We begin with the raw amino-acid sequence, 397 residues long: uncharacterized protein (397 aa).

12 helical membrane passes run 10 to 30, 48 to 68, 76 to 96, 106 to 126, 141 to 161, 165 to 185, 209 to 229, 242 to 262, 274 to 294, 296 to 316, 334 to 354, and 363 to 383; these read FIIF…YAVM, GLLV…VTII, PVLL…ALAP, ILSA…ASEM, GGLT…GDVL, AVFS…MAAV, LFSF…YTFI, VGIT…NFFA, MIGV…IAIY, AAAI…PPLL, VSVS…GMIL, and LFAG…FAHL.

It belongs to the major facilitator superfamily.

Its subcellular location is the cell membrane. This is an uncharacterized protein from Bacillus subtilis (strain 168).